The sequence spans 182 residues: Dual-action ribosomal maturation protein DarP (182 aa).

The protein belongs to the DarP family.

Its subcellular location is the cytoplasm. Its function is as follows. Member of a network of 50S ribosomal subunit biogenesis factors which assembles along the 30S-50S interface, preventing incorrect 23S rRNA structures from forming. Promotes peptidyl transferase center (PTC) maturation. This Yersinia pestis protein is Dual-action ribosomal maturation protein DarP.